A 274-amino-acid chain; its full sequence is Ribosomal RNA small subunit methyltransferase A (274 aa).

Residues N28, L30, G55, E77, D103, and N122 each contribute to the S-adenosyl-L-methionine site.

Belongs to the class I-like SAM-binding methyltransferase superfamily. rRNA adenine N(6)-methyltransferase family. RsmA subfamily.

Its subcellular location is the cytoplasm. The enzyme catalyses adenosine(1518)/adenosine(1519) in 16S rRNA + 4 S-adenosyl-L-methionine = N(6)-dimethyladenosine(1518)/N(6)-dimethyladenosine(1519) in 16S rRNA + 4 S-adenosyl-L-homocysteine + 4 H(+). Functionally, specifically dimethylates two adjacent adenosines (A1518 and A1519) in the loop of a conserved hairpin near the 3'-end of 16S rRNA in the 30S particle. May play a critical role in biogenesis of 30S subunits. In Sinorhizobium medicae (strain WSM419) (Ensifer medicae), this protein is Ribosomal RNA small subunit methyltransferase A.